The following is a 161-amino-acid chain: Regulator of ribonuclease activity A (161 aa).

Belongs to the RraA family. As to quaternary structure, homotrimer. Binds to both RNA-binding sites in the C-terminal region of Rne and to RhlB.

The protein localises to the cytoplasm. Functionally, globally modulates RNA abundance by binding to RNase E (Rne) and regulating its endonucleolytic activity. Can modulate Rne action in a substrate-dependent manner by altering the composition of the degradosome. Modulates RNA-binding and helicase activities of the degradosome. This Shigella flexneri serotype 5b (strain 8401) protein is Regulator of ribonuclease activity A.